The primary structure comprises 229 residues: NAD-dependent protein deacetylase (229 aa).

The 229-residue stretch at 1–229 folds into the Deacetylase sirtuin-type domain; that stretch reads MNKLNEALKK…SDAVKVFAEI (229 aa). The NAD(+) site is built by alanine 20, arginine 32, glutamine 96, isoleucine 98, aspartate 99, histidine 114, threonine 181, serine 182, asparagine 205, and valine 223. Isoleucine 98 and aspartate 99 together coordinate nicotinamide. The active-site Proton acceptor is the histidine 114.

Belongs to the sirtuin family. Class U subfamily.

The protein resides in the cytoplasm. It carries out the reaction N(6)-acetyl-L-lysyl-[protein] + NAD(+) + H2O = 2''-O-acetyl-ADP-D-ribose + nicotinamide + L-lysyl-[protein]. NAD-dependent protein deacetylase which modulates the activities of several enzymes which are inactive in their acetylated form. This is NAD-dependent protein deacetylase from Listeria monocytogenes serotype 4b (strain F2365).